We begin with the raw amino-acid sequence, 112 residues long: MAIAYAKLYELIHKKIKDEREADELYNAIIEIIKESKVIVKNELKDELKDELATKKDIDLVREEMKAMEERILRYVDNRFNQLLIVQLIILFAIIITNPNAIELIKLLFGFK.

A helical membrane pass occupies residues 85-105; that stretch reads IVQLIILFAIIITNPNAIELI.

This sequence belongs to the M.jannaschii MJ0023/MJ0349/MJ1072/MJ1074/MJ1107/MJECL16 family.

The protein localises to the membrane. This is an uncharacterized protein from Methanocaldococcus jannaschii (strain ATCC 43067 / DSM 2661 / JAL-1 / JCM 10045 / NBRC 100440) (Methanococcus jannaschii).